Consider the following 137-residue polypeptide: Large ribosomal subunit protein uL16 (137 aa).

Belongs to the universal ribosomal protein uL16 family. As to quaternary structure, part of the 50S ribosomal subunit.

Binds 23S rRNA and is also seen to make contacts with the A and possibly P site tRNAs. The chain is Large ribosomal subunit protein uL16 from Chlamydia abortus (strain DSM 27085 / S26/3) (Chlamydophila abortus).